The sequence spans 222 residues: 26S proteasome non-ATPase regulatory subunit 9 (222 aa).

A PDZ domain is found at 108 to 194 (QARDMAEARE…KPLNVMVIRR (87 aa)). At Ser-128 the chain carries Phosphoserine.

Belongs to the proteasome subunit p27 family. In terms of assembly, interacts with PSMC3. Part of a transient complex (modulator) containing PSMD9, PSMC6 and PSMC3 formed during the assembly of the 26S proteasome.

Functionally, acts as a chaperone during the assembly of the 26S proteasome, specifically of the base subcomplex of the PA700/19S regulatory complex (RC). During the base subcomplex assembly is part of an intermediate PSMD9:PSMC6:PSMC3 module, also known as modulator trimer complex; PSMD9 is released during the further base assembly process. This Rattus norvegicus (Rat) protein is 26S proteasome non-ATPase regulatory subunit 9 (Psmd9).